The primary structure comprises 176 residues: Ribosome rescue factor SmrB (176 aa).

Positions 97–172 (LDMHGMTQQE…GNGALLVLID (76 aa)) constitute a Smr domain.

This sequence belongs to the SmrB family. As to quaternary structure, associates with collided ribosomes, but not with correctly translating polysomes.

Its function is as follows. Acts as a ribosome collision sensor. Detects stalled/collided disomes (pairs of ribosomes where the leading ribosome is stalled and a second ribosome has collided with it) and endonucleolytically cleaves mRNA at the 5' boundary of the stalled ribosome. Stalled/collided disomes form a new interface (primarily via the 30S subunits) that binds SmrB. Cleaved mRNA becomes available for tmRNA ligation, leading to ribosomal subunit dissociation and rescue of stalled ribosomes. This chain is Ribosome rescue factor SmrB, found in Photobacterium profundum (strain SS9).